The chain runs to 314 residues: Small ribosomal subunit biogenesis GTPase RsgA (314 aa).

The disordered stretch occupies residues 1-20 (MKRAPTKQPAKPAARGGERA). One can recognise a CP-type G domain in the interval 85–246 (SDQFKSKLFA…LIDSPGFQEF (162 aa)). GTP is bound by residues 134-137 (NKID) and 188-196 (GQSGMGKST). 4 residues coordinate Zn(2+): C270, C275, H277, and C283.

The protein belongs to the TRAFAC class YlqF/YawG GTPase family. RsgA subfamily. As to quaternary structure, monomer. Associates with 30S ribosomal subunit, binds 16S rRNA. Zn(2+) is required as a cofactor.

It is found in the cytoplasm. In terms of biological role, one of several proteins that assist in the late maturation steps of the functional core of the 30S ribosomal subunit. Helps release RbfA from mature subunits. May play a role in the assembly of ribosomal proteins into the subunit. Circularly permuted GTPase that catalyzes slow GTP hydrolysis, GTPase activity is stimulated by the 30S ribosomal subunit. This is Small ribosomal subunit biogenesis GTPase RsgA from Burkholderia pseudomallei (strain K96243).